The sequence spans 464 residues: Siroheme synthase (464 aa).

The tract at residues 1–203 (MDYLPLFHNL…GQETEAERLL (203 aa)) is precorrin-2 dehydrogenase /sirohydrochlorin ferrochelatase. NAD(+) contacts are provided by residues 22 to 23 (EI) and 43 to 44 (PQ). Position 128 is a phosphoserine (serine 128). A uroporphyrinogen-III C-methyltransferase region spans residues 216-464 (GEVYLVGAGP…AWFEGRQSAD (249 aa)). Residue proline 225 coordinates S-adenosyl-L-methionine. Aspartate 248 functions as the Proton acceptor in the catalytic mechanism. The active-site Proton donor is lysine 270. S-adenosyl-L-methionine-binding positions include 301–303 (GGD), isoleucine 306, 331–332 (TA), methionine 383, and glycine 412.

In the N-terminal section; belongs to the precorrin-2 dehydrogenase / sirohydrochlorin ferrochelatase family. This sequence in the C-terminal section; belongs to the precorrin methyltransferase family.

It carries out the reaction uroporphyrinogen III + 2 S-adenosyl-L-methionine = precorrin-2 + 2 S-adenosyl-L-homocysteine + H(+). The catalysed reaction is precorrin-2 + NAD(+) = sirohydrochlorin + NADH + 2 H(+). It catalyses the reaction siroheme + 2 H(+) = sirohydrochlorin + Fe(2+). Its pathway is cofactor biosynthesis; adenosylcobalamin biosynthesis; precorrin-2 from uroporphyrinogen III: step 1/1. It functions in the pathway cofactor biosynthesis; adenosylcobalamin biosynthesis; sirohydrochlorin from precorrin-2: step 1/1. The protein operates within porphyrin-containing compound metabolism; siroheme biosynthesis; precorrin-2 from uroporphyrinogen III: step 1/1. It participates in porphyrin-containing compound metabolism; siroheme biosynthesis; siroheme from sirohydrochlorin: step 1/1. Its pathway is porphyrin-containing compound metabolism; siroheme biosynthesis; sirohydrochlorin from precorrin-2: step 1/1. In terms of biological role, multifunctional enzyme that catalyzes the SAM-dependent methylations of uroporphyrinogen III at position C-2 and C-7 to form precorrin-2 via precorrin-1. Then it catalyzes the NAD-dependent ring dehydrogenation of precorrin-2 to yield sirohydrochlorin. Finally, it catalyzes the ferrochelation of sirohydrochlorin to yield siroheme. The chain is Siroheme synthase from Azotobacter vinelandii (strain DJ / ATCC BAA-1303).